Here is a 67-residue protein sequence, read N- to C-terminus: Large ribosomal subunit protein bL35 (67 aa).

A disordered region spans residues 1-41; sequence MPKMKTHRGAAKRFKKTGTGKLKRSHAYTSHMFRHKSQKQK.

It belongs to the bacterial ribosomal protein bL35 family.

The sequence is that of Large ribosomal subunit protein bL35 from Shouchella clausii (strain KSM-K16) (Alkalihalobacillus clausii).